The primary structure comprises 447 residues: Chromosomal replication initiator protein DnaA (447 aa).

The domain I, interacts with DnaA modulators stretch occupies residues 1–70; that stretch reads MQDFWSKAMD…EEILSEQLGE (70 aa). The interval 70–110 is domain II; sequence EPVTLLFAADPALEKPVASKTQTVTPVQSGGETGDQENFHS. Residues 87–109 form a disordered region; sequence ASKTQTVTPVQSGGETGDQENFH. Residues 88–99 are compositionally biased toward polar residues; the sequence is SKTQTVTPVQSG. Residues 111–327 are domain III, AAA+ region; sequence GLDPRYTFDS…GALIRVSAYA (217 aa). ATP is bound by residues glycine 155, glycine 157, lysine 158, and threonine 159. Residues 328 to 447 form a domain IV, binds dsDNA region; it reads SLTGKPITMA…LASLKSMLQK (120 aa).

The protein belongs to the DnaA family. As to quaternary structure, oligomerizes as a right-handed, spiral filament on DNA at oriC.

Its subcellular location is the cytoplasm. Plays an essential role in the initiation and regulation of chromosomal replication. ATP-DnaA binds to the origin of replication (oriC) to initiate formation of the DNA replication initiation complex once per cell cycle. Binds the DnaA box (a 9 base pair repeat at the origin) and separates the double-stranded (ds)DNA. Forms a right-handed helical filament on oriC DNA; dsDNA binds to the exterior of the filament while single-stranded (ss)DNA is stabiized in the filament's interior. The ATP-DnaA-oriC complex binds and stabilizes one strand of the AT-rich DNA unwinding element (DUE), permitting loading of DNA polymerase. After initiation quickly degrades to an ADP-DnaA complex that is not apt for DNA replication. Binds acidic phospholipids. In Magnetococcus marinus (strain ATCC BAA-1437 / JCM 17883 / MC-1), this protein is Chromosomal replication initiator protein DnaA.